The primary structure comprises 286 residues: Phosphatidylserine decarboxylase proenzyme (286 aa).

Active-site charge relay system; for autoendoproteolytic cleavage activity residues include Asp90, His147, and Ser250. The active-site Schiff-base intermediate with substrate; via pyruvic acid; for decarboxylase activity is Ser250. The residue at position 250 (Ser250) is a Pyruvic acid (Ser); by autocatalysis.

It belongs to the phosphatidylserine decarboxylase family. PSD-B subfamily. Prokaryotic type I sub-subfamily. In terms of assembly, heterodimer of a large membrane-associated beta subunit and a small pyruvoyl-containing alpha subunit. The cofactor is pyruvate. Is synthesized initially as an inactive proenzyme. Formation of the active enzyme involves a self-maturation process in which the active site pyruvoyl group is generated from an internal serine residue via an autocatalytic post-translational modification. Two non-identical subunits are generated from the proenzyme in this reaction, and the pyruvate is formed at the N-terminus of the alpha chain, which is derived from the carboxyl end of the proenzyme. The autoendoproteolytic cleavage occurs by a canonical serine protease mechanism, in which the side chain hydroxyl group of the serine supplies its oxygen atom to form the C-terminus of the beta chain, while the remainder of the serine residue undergoes an oxidative deamination to produce ammonia and the pyruvoyl prosthetic group on the alpha chain. During this reaction, the Ser that is part of the protease active site of the proenzyme becomes the pyruvoyl prosthetic group, which constitutes an essential element of the active site of the mature decarboxylase.

It is found in the cell membrane. It catalyses the reaction a 1,2-diacyl-sn-glycero-3-phospho-L-serine + H(+) = a 1,2-diacyl-sn-glycero-3-phosphoethanolamine + CO2. It participates in phospholipid metabolism; phosphatidylethanolamine biosynthesis; phosphatidylethanolamine from CDP-diacylglycerol: step 2/2. Its function is as follows. Catalyzes the formation of phosphatidylethanolamine (PtdEtn) from phosphatidylserine (PtdSer). The chain is Phosphatidylserine decarboxylase proenzyme from Psychromonas ingrahamii (strain DSM 17664 / CCUG 51855 / 37).